We begin with the raw amino-acid sequence, 194 residues long: UPF0215 protein Mbar_A0619 (194 aa).

Belongs to the UPF0215 family.

This chain is UPF0215 protein Mbar_A0619, found in Methanosarcina barkeri (strain Fusaro / DSM 804).